A 106-amino-acid chain; its full sequence is MQYLAAYALVALSGKTPSKADVQAVLKAAGVAVDASRVDAVFQEVEGKSFDALVAEGRTKLVGSGSAAPAGAVSTAGAGAGAVAEAKKEEPEEEEADDDMGFGLFD.

Residues 79-106 (GAGAVAEAKKEEPEEEEADDDMGFGLFD) form a disordered region. Positions 91 to 100 (PEEEEADDDM) are enriched in acidic residues.

This sequence belongs to the eukaryotic ribosomal protein P1/P2 family. In terms of assembly, P1 and P2 exist as dimers at the large ribosomal subunit. Post-translationally, phosphorylated.

Functionally, plays an important role in the elongation step of protein synthesis. This is Large ribosomal subunit protein P2 (LIP) from Leishmania infantum.